The sequence spans 152 residues: Large ribosomal subunit protein uL15 (152 aa).

The disordered stretch occupies residues 1–66 (MRSNPMTLRL…GFEGGQTPMQ (66 aa)). Over residues 28–38 (RGIGSGLGKTA) the composition is skewed to gly residues. Residues 39 to 52 (GRGHKGSFARKGGG) are compositionally biased toward basic residues.

It belongs to the universal ribosomal protein uL15 family. As to quaternary structure, part of the 50S ribosomal subunit.

In terms of biological role, binds to the 23S rRNA. This is Large ribosomal subunit protein uL15 from Xanthomonas oryzae pv. oryzae (strain KACC10331 / KXO85).